Reading from the N-terminus, the 445-residue chain is Phosphoglucosamine mutase (445 aa).

The active-site Phosphoserine intermediate is the serine 99. Residues serine 99, aspartate 242, aspartate 244, and aspartate 246 each contribute to the Mg(2+) site. Residue serine 99 is modified to Phosphoserine.

This sequence belongs to the phosphohexose mutase family. Requires Mg(2+) as cofactor. Activated by phosphorylation.

It catalyses the reaction alpha-D-glucosamine 1-phosphate = D-glucosamine 6-phosphate. Functionally, catalyzes the conversion of glucosamine-6-phosphate to glucosamine-1-phosphate. The chain is Phosphoglucosamine mutase from Campylobacter jejuni subsp. jejuni serotype O:6 (strain 81116 / NCTC 11828).